The sequence spans 580 residues: Transcription factor coe2-B (580 aa).

The segment at 60–63 (RKSN) is interaction with DNA. Residues 148 to 167 (CRVLLTHEVMCSRCCEKKSC) form a C5-type zinc finger. Interaction with DNA regions lie at residues 194-201 (NCLKTAGN) and 233-236 (NNSK). Residues 259 to 341 (PCIKAISPSE…CKGAPGRFIY (83 aa)) form the IPT/TIG domain. Residues 455–492 (IRNTSSISPRGYSSSSTPQQSNYSTPSNSMNGYSNVPM) are disordered. Over residues 459–481 (SSISPRGYSSSSTPQQSNYSTPS) the composition is skewed to low complexity. A compositionally biased stretch (polar residues) spans 482 to 492 (NSMNGYSNVPM).

It belongs to the COE family. In terms of tissue distribution, in embryos, expressed in precursors of primary neurons. In adults, expressed at high levels in the brain, and at low levels in the somatic muscles, testis, and possibly the spleen.

It is found in the nucleus. Functionally, may play a pivotal role in the transcriptional cascade that specifies primary neurons in embryos. Stabilizes the higher neural potential of selected progenitor cells that express neurog2/X-ngnr-1 by maintaining Delta-Notch signaling. Thus ensures the transition between neural competence and irreversible commitment to a neural fate. Also promotes neuronal differentiation by activating neurod1 expression, directly or indirectly. This chain is Transcription factor coe2-B, found in Xenopus laevis (African clawed frog).